The primary structure comprises 387 residues: Large ribosomal subunit protein uL3 (387 aa).

The protein belongs to the universal ribosomal protein uL3 family.

It is found in the cytoplasm. The sequence is that of Large ribosomal subunit protein uL3 (RPL3) from Eremothecium gossypii (strain ATCC 10895 / CBS 109.51 / FGSC 9923 / NRRL Y-1056) (Yeast).